Consider the following 406-residue polypeptide: 2,3-bisphosphoglycerate-independent phosphoglycerate mutase (406 aa).

The disordered stretch occupies residues 156-183; it reads NLSDKISDSDPHSEGKPPEPIRPLDPSA. Residues 160–174 show a composition bias toward basic and acidic residues; the sequence is KISDSDPHSEGKPPE.

It belongs to the BPG-independent phosphoglycerate mutase family. A-PGAM subfamily.

It carries out the reaction (2R)-2-phosphoglycerate = (2R)-3-phosphoglycerate. Its pathway is carbohydrate degradation; glycolysis; pyruvate from D-glyceraldehyde 3-phosphate: step 3/5. In terms of biological role, catalyzes the interconversion of 2-phosphoglycerate and 3-phosphoglycerate. The sequence is that of 2,3-bisphosphoglycerate-independent phosphoglycerate mutase from Thermoplasma volcanium (strain ATCC 51530 / DSM 4299 / JCM 9571 / NBRC 15438 / GSS1).